Here is a 266-residue protein sequence, read N- to C-terminus: Putative carbamate hydrolase RutD (266 aa).

The AB hydrolase-1 domain maps to 14 to 238; the sequence is PVVVLSAGLG…RVEMPWGGHA (225 aa).

The protein belongs to the AB hydrolase superfamily. Hydrolase RutD family.

It catalyses the reaction carbamate + 2 H(+) = NH4(+) + CO2. In terms of biological role, involved in pyrimidine catabolism. May facilitate the hydrolysis of carbamate, a reaction that can also occur spontaneously. The protein is Putative carbamate hydrolase RutD of Klebsiella pneumoniae (strain 342).